A 189-amino-acid polypeptide reads, in one-letter code: Elongation factor P (189 aa).

An N6-(3,6-diaminohexanoyl)-5-hydroxylysine modification is found at Lys34.

This sequence belongs to the elongation factor P family. In terms of processing, may be beta-lysylated on the epsilon-amino group of Lys-34 by the combined action of EpmA and EpmB, and then hydroxylated on the C5 position of the same residue by EpmC (if this protein is present). Lysylation is critical for the stimulatory effect of EF-P on peptide-bond formation. The lysylation moiety may extend toward the peptidyltransferase center and stabilize the terminal 3-CCA end of the tRNA. Hydroxylation of the C5 position on Lys-34 may allow additional potential stabilizing hydrogen-bond interactions with the P-tRNA.

It localises to the cytoplasm. It functions in the pathway protein biosynthesis; polypeptide chain elongation. Involved in peptide bond synthesis. Alleviates ribosome stalling that occurs when 3 or more consecutive Pro residues or the sequence PPG is present in a protein, possibly by augmenting the peptidyl transferase activity of the ribosome. Modification of Lys-34 is required for alleviation. The chain is Elongation factor P from Francisella tularensis subsp. tularensis (strain FSC 198).